Here is a 148-residue protein sequence, read N- to C-terminus: Coactosin (148 aa).

The region spanning 1 to 134 (MSGFDLSEVA…VEDEIAAKIK (134 aa)) is the ADF-H domain. Positions 71-76 (DEESKR) match the F-loop; important for stable binding to G-actin and F-actin motif. Phosphoserine is present on S147.

This sequence belongs to the actin-binding proteins ADF family. Coactosin subfamily. Interacts with 14-3-3 protein 3. In terms of processing, phosphorylation at Ser-147 appears not to affect its binding to actin; however, it may regulate phagocytosis and motility.

The protein resides in the cytoplasm. Its subcellular location is the cell projection. It is found in the phagocytic cup. It localises to the pseudopodium. The protein localises to the cell membrane. The protein resides in the cytoskeleton. In terms of biological role, actin-binding protein which is involved in F-actin stabilization. May play a role during phagocytosis and pseudopod formation by contributing to the maintenance of F-actin. This Entamoeba histolytica (strain ATCC 30459 / HM-1:IMSS / ABRM) protein is Coactosin.